The chain runs to 229 residues: Ribonuclease 3 (229 aa).

The region spanning 5 to 127 (LNRLERKLGH…LIGAIYLDAG (123 aa)) is the RNase III domain. Glutamate 40 is a Mg(2+) binding site. Residue aspartate 44 is part of the active site. 2 residues coordinate Mg(2+): aspartate 113 and glutamate 116. Residue glutamate 116 is part of the active site. One can recognise a DRBM domain in the interval 154–224 (DPKTRLQEFL…AAAALVALGV (71 aa)).

It belongs to the ribonuclease III family. As to quaternary structure, homodimer. The cofactor is Mg(2+).

The protein localises to the cytoplasm. It carries out the reaction Endonucleolytic cleavage to 5'-phosphomonoester.. In terms of biological role, digests double-stranded RNA. Involved in the processing of primary rRNA transcript to yield the immediate precursors to the large and small rRNAs (23S and 16S). Processes some mRNAs, and tRNAs when they are encoded in the rRNA operon. Processes pre-crRNA and tracrRNA of type II CRISPR loci if present in the organism. In Azotobacter vinelandii (strain DJ / ATCC BAA-1303), this protein is Ribonuclease 3.